Reading from the N-terminus, the 303-residue chain is MDLDQWISKVKDGQHLLEDELQLLCEYVKEILIEESNVQPVNSPVTVCGDIHGQFHDLMKLFQTGGHVPETNYIFMGDFVDRGYNSLEVFTILLLLKARYPANITLLRGNHESRQLTQVYGFYDECQRKYGNANAWRYCTDVFDYLTLSAIIDGTVLCVHGGLSPDIRTIDQIRVIERNCEIPHEGPFCDLMWSDPEDIETWAVSPRGAGWLFGSRVTSEFNHINNLDLVCRAHQLVQEGLKYMFQDKGLVTVWSAPNYCYRCGNVASILSFNENMEREVKFFTETEENNQMRGPRTGVPYFL.

Residues aspartate 50, histidine 52, aspartate 78, and asparagine 110 each coordinate Zn(2+). The active-site Proton donor is histidine 111. Zn(2+) is bound by residues histidine 160 and histidine 234.

This sequence belongs to the PPP phosphatase family. PP-6 (PP-V) subfamily. Interacts with PHYA and PHYB, mostly when they are phosphorylated and in Pfr forms. Zn(2+) serves as cofactor. In terms of tissue distribution, mostly expressed in flowers and stems.

The protein localises to the cytoplasm. The enzyme catalyses O-phospho-L-seryl-[protein] + H2O = L-seryl-[protein] + phosphate. It carries out the reaction O-phospho-L-threonyl-[protein] + H2O = L-threonyl-[protein] + phosphate. Functionally, catalytic subunit of protein phosphatase 6 (PP6). Dephosphorylates phosphorylated phytochromes, with a preference toward Pfr forms. Plays a major role in the photoperiodic control of flowering time in long days by modulating phytochrome signals in flowering time control. This is Phytochrome-associated serine/threonine-protein phosphatase from Pisum sativum (Garden pea).